Reading from the N-terminus, the 379-residue chain is DnaJ homolog subfamily B member 14 (379 aa).

Residues 1–244 lie on the Cytoplasmic side of the membrane; that stretch reads MEGNRDEAEK…GHEREEERGD (244 aa). Positions 55–94 are disordered; that stretch reads STAGNSPHCRKPSGGGDQSKPNCTKDSSSGSGESGKGYTK. The J domain occupies 108-172; the sequence is NYYEVLGVTK…EKRKQYDLTG (65 aa). Positions 221-241 are disordered; it reads GRAGYSNQHQHRHSGHEREEE. The chain crosses the membrane as a helical span at residues 245–265; sequence GGFSVFIQLMPIIVLILVSLL. Residues 266-379 are Lumenal-facing; the sequence is SQLMVSNPPY…ERLTSIYKGG (114 aa).

Belongs to the DnaJ family. DNAJB12/DNAJB14 subfamily. In terms of assembly, interacts (via J domain) with HSPA8/Hsc70. Forms a multiprotein complex, at least composed of DNAJB12, DNAJB14, HSPA8/Hsc70 and SGTA; interaction with DNAJB14 and HSPA8/Hsc70 is direct.

It localises to the endoplasmic reticulum membrane. The protein localises to the nucleus membrane. Its function is as follows. Acts as a co-chaperone with HSPA8/Hsc70; required to promote protein folding and trafficking, prevent aggregation of client proteins, and promote unfolded proteins to endoplasmic reticulum-associated degradation (ERAD) pathway. Acts by determining HSPA8/Hsc70's ATPase and polypeptide-binding activities. Can also act independently of HSPA8/Hsc70: together with DNAJB12, acts as a chaperone that promotes maturation of potassium channels KCND2 and KCNH2 by stabilizing nascent channel subunits and assembling them into tetramers. While stabilization of nascent channel proteins is dependent on HSPA8/Hsc70, the process of oligomerization of channel subunits is independent of HSPA8/Hsc70. When overexpressed, forms membranous structures together with DNAJB12 and HSPA8/Hsc70 within the nucleus; the role of these structures, named DJANGOs, is still unclear. The sequence is that of DnaJ homolog subfamily B member 14 (DNAJB14) from Bos taurus (Bovine).